Here is a 786-residue protein sequence, read N- to C-terminus: Rho GTPase-activating protein 10 (786 aa).

The 256-residue stretch at 7–262 (EFSDCYLDSP…IRQNPKDHKR (256 aa)) folds into the BAR domain. Positions 265-372 (QFTAEGYLYV…WLEALGGKEA (108 aa)) constitute a PH domain. Residues 389-574 (AQLDKMGFTI…ILIENHEKIF (186 aa)) enclose the Rho-GAP domain. Disordered regions lie at residues 576–608 (TPPD…QRTK) and 621–727 (EDGD…PPES). A compositionally biased stretch (basic residues) spans 599 to 608 (QSKRQGQRTK). The segment covering 634-651 (PTSSLDSLSSPSPVTTAV) has biased composition (low complexity). Residues 676 to 688 (IPGQTRSSMVQWL) show a composition bias toward polar residues. Residues 689–712 (NPQSPTTTSSNSAVTPLSPGSSPF) show a composition bias toward low complexity. Residues 728–786 (IRSRKARAVYPCEAEHSSELSFEIGAIFEDVQTSREPGWLEGTLNGKRGLIPQNYVKLL) enclose the SH3 domain.

Interacts with PKN3. Interacts with caspase-activated PAK2 proteolytic fragment PAK-2p34; the interaction does not affect GRAF2/ARHGAP10 GTPase activation activity towards RHOA and CDC42. Interacts via its SH3 domain with PTK2/FAK1. Interacts with PTK2B/PYK2; the interaction negatively regulates GRAF2/ARHGAP10 GTPase-activating activity. Interacts with MICAL1 and WDR44; complex formation might transit from GRAF2/ARHGAP10-MICAL1 to GRAF2/ARHGAP10-WDR44 complexes. Post-translationally, phosphorylated. Phosphorylated in vitro by constitutive active PKN3. High levels of expression in heart and skeletal muscle.

It localises to the cytoplasm. Its subcellular location is the perinuclear region. It is found in the cell membrane. The protein localises to the endosome membrane. In terms of biological role, GTPase-activating protein that catalyzes the conversion of active GTP-bound Rho GTPases to their inactive GDP-bound form, thus suppressing various Rho GTPase-mediated cellular processes. Also converts Cdc42 to an inactive GDP-bound state. Essential for PTKB2 regulation of cytoskeletal organization via Rho family GTPases. Inhibits PAK2 proteolytic fragment PAK-2p34 kinase activity and changes its localization from the nucleus to the perinuclear region. Stabilizes PAK-2p34 thereby increasing stimulation of cell death. Associates with MICAL1 on the endosomal membrane to promote Rab8-Rab10-dependent tubule extension. After dissociation with MICAL1, recruits WDR44 which connects the endoplasmic reticulum (ER) with the endosomal tubule, thereby participating in the export of a subset of neosynthesized proteins. This is Rho GTPase-activating protein 10 (ARHGAP10) from Homo sapiens (Human).